Reading from the N-terminus, the 580-residue chain is MLIRFRSKNGTHRVSCQENDLFGTVIEKLVGNLDPNADVDTFTVCEKPGQGIHAVSELADRTVMDLGLKHGDMLILNYSDKPANEKDGVNVEIGSVGIDSKGIRQHRYGPLRIKELAVDEELEKEDGLIPRQKSKLCKHGDRGMCEYCSPLPPWDKEYHEKNKIKHISFHSYLKKLNENANKKENGSSYISPLSEPDFRINKRCHNGHEPWPRGICSKCQPSAITLQQQEFRMVDHVEFQKSEIINEFIQAWRYTGMQRFGYMYGSYSKYDNTPLGIKAVVEAIYEPPQHDEQDGLTMDVEQVKNEMLQIDRQAQEMGLSRIGLIFTDLSDAGAGDGSVFCKRHKDSFFLSSLEVIMAARHQTRHPNVSKYSEQGFFSSKFVTCVISGNLEGEIDISSYQVSTEAEALVTADMISGSTFPSMAYINDTTDERYVPEIFYMKSNEYGITVKENAKPAFPVDYLLVTLTHGFPNTDTETNSKFVSSTGFPWSNRQAMGQSQDYQELKKYLFNVASSGDFNLLHEKISNFHLLLYINSLQILSPDEWKLLIESAVKNEWEESLLKLVSSAGWQTLVMILQESG.

Residues 237-377 (VEFQKSEIIN…VSKYSEQGFF (141 aa)) form the MPN domain.

Belongs to the NPL4 family. In terms of assembly, component of the heterotrimeric CDC48-NPL4-UFD1 ATPase complex. The CDC48-NPL4-UFD1 ATPase complex interacts with the HRD1 ubiquitin ligase complex composed of the E3 ligase HRD1, its cofactors HRD3, USA1 and DER1, substrate recruiting factor YOS9 and CDC48-binding protein UBX2. Interaction between the complexes is mediated by interaction between CDC48-NPL4-UFD1 complex member CDC48 and HRD1 complex member UBX2. Forms a complex composed of CDC48, NPL4, UFD1, DOA1, SHP1 and deubiquitinase OTU1. Interacts with CDC48, UFD1 and VMS1.

It localises to the cytoplasm. Its subcellular location is the perinuclear region. It is found in the endoplasmic reticulum membrane. The protein resides in the nucleus membrane. In terms of biological role, substrate-recruiting cofactor of the CDC48-NPL4-UFD1 segregase. Assists CDC48 in the dislocation of misfolded, polyubiquitinated ERAD substrates that are subsequently delivered to the proteasome for degradation. Involved in the import of nuclear-targeted proteins into the nucleus and the export of poly(A) RNA out of the nucleus. Required for the proteasome-dependent processing/activation of MGA2 and SPT23 transcription factors leading to the subsequent expression of OLE1. Regulates ubiquitin-mediated mitochondria protein degradation. Involved in spindle disassembly probably by promoting the degradation of spindle assemby factors ASE1 and CDC5 at the end of mitosis. In Saccharomyces cerevisiae (strain ATCC 204508 / S288c) (Baker's yeast), this protein is Nuclear protein localization protein 4 (NPL4).